The sequence spans 459 residues: Phosphoglucosamine mutase (459 aa).

Catalysis depends on serine 106, which acts as the Phosphoserine intermediate. Residues serine 106, aspartate 247, aspartate 249, and aspartate 251 each coordinate Mg(2+). At serine 106 the chain carries Phosphoserine.

Belongs to the phosphohexose mutase family. Mg(2+) is required as a cofactor. Post-translationally, activated by phosphorylation.

The catalysed reaction is alpha-D-glucosamine 1-phosphate = D-glucosamine 6-phosphate. Its function is as follows. Catalyzes the conversion of glucosamine-6-phosphate to glucosamine-1-phosphate. In Chlamydia muridarum (strain MoPn / Nigg), this protein is Phosphoglucosamine mutase.